We begin with the raw amino-acid sequence, 92 residues long: Acylphosphatase (92 aa).

Residues 6-92 form the Acylphosphatase-like domain; it reads RAHVYVSGRV…EGVDGFEIRR (87 aa). Active-site residues include arginine 21 and asparagine 39.

It belongs to the acylphosphatase family.

It catalyses the reaction an acyl phosphate + H2O = a carboxylate + phosphate + H(+). The chain is Acylphosphatase (acyP) from Natronomonas pharaonis (strain ATCC 35678 / DSM 2160 / CIP 103997 / JCM 8858 / NBRC 14720 / NCIMB 2260 / Gabara) (Halobacterium pharaonis).